A 469-amino-acid polypeptide reads, in one-letter code: Argininosuccinate lyase (469 aa).

It belongs to the lyase 1 family. Argininosuccinate lyase subfamily.

The protein resides in the cytoplasm. It carries out the reaction 2-(N(omega)-L-arginino)succinate = fumarate + L-arginine. Its pathway is amino-acid biosynthesis; L-arginine biosynthesis; L-arginine from L-ornithine and carbamoyl phosphate: step 3/3. This chain is Argininosuccinate lyase, found in Burkholderia cenocepacia (strain ATCC BAA-245 / DSM 16553 / LMG 16656 / NCTC 13227 / J2315 / CF5610) (Burkholderia cepacia (strain J2315)).